Here is a 429-residue protein sequence, read N- to C-terminus: MRVKYFGTDGIRGVFGETLTDELAFKVGKALGEIVGEGRVIVGKDTRVSGDSLEAAISAGLTSMGVDVLLCGVLPTPAVALLTRITRSFGVVISASHNPPEYNGIKVLKGGYKIPDEMEVKIEEKIESGYFPVRSVVGRTKSFREGRDMYIGAVLEIFRDLDLTGEMVSLDLANGATTTTAKEVFEFLGAKVEVFNDSQDGLLINQGCGATHPRFLAEEMKNGKVGFTFDGDGDRVIAVDEERNVVNGDRIIGILAVGLKEEGRLNSDTVVGTVMTNGGLEDFLKERGIKLLRTKVGDKYVLEKMIESGANLGGERSGHIIILDRSTTGDGLITALELMRVLRRSGRNLSDFAKEIPDYPQITKNVRRTERMSLENENLRKIVEESTSRGYRVVIRPSGTEPVVRITVEGKDREEIEKIVEEISRVLES.

The Phosphoserine intermediate role is filled by Ser-96. Residues Ser-96, Asp-230, Asp-232, and Asp-234 each coordinate Mg(2+). Ser-96 carries the post-translational modification Phosphoserine.

Belongs to the phosphohexose mutase family. Requires Mg(2+) as cofactor. Activated by phosphorylation.

It catalyses the reaction alpha-D-glucosamine 1-phosphate = D-glucosamine 6-phosphate. In terms of biological role, catalyzes the conversion of glucosamine-6-phosphate to glucosamine-1-phosphate. The polypeptide is Phosphoglucosamine mutase (Thermotoga petrophila (strain ATCC BAA-488 / DSM 13995 / JCM 10881 / RKU-1)).